The primary structure comprises 118 residues: Ribonuclease P protein component (118 aa).

This sequence belongs to the RnpA family. Consists of a catalytic RNA component (M1 or rnpB) and a protein subunit.

The catalysed reaction is Endonucleolytic cleavage of RNA, removing 5'-extranucleotides from tRNA precursor.. Functionally, RNaseP catalyzes the removal of the 5'-leader sequence from pre-tRNA to produce the mature 5'-terminus. It can also cleave other RNA substrates such as 4.5S RNA. The protein component plays an auxiliary but essential role in vivo by binding to the 5'-leader sequence and broadening the substrate specificity of the ribozyme. This Rickettsia akari (strain Hartford) protein is Ribonuclease P protein component.